A 559-amino-acid polypeptide reads, in one-letter code: Polypeptide N-acetylgalactosaminyltransferase 1 (559 aa).

Over methionine 1–lysine 8 the chain is Cytoplasmic. Residues valine 9–phenylalanine 28 traverse the membrane as a helical; Signal-anchor for type II membrane protein segment. Over serine 29 to phenylalanine 559 the chain is Lumenal. Asparagine 95 is a glycosylation site (N-linked (GlcNAc...) asparagine). Intrachain disulfides connect cysteine 106-cysteine 339, cysteine 330-cysteine 408, cysteine 442-cysteine 459, cysteine 482-cysteine 497, and cysteine 523-cysteine 540. Residues leucine 115–arginine 225 are catalytic subdomain A. Residues aspartate 156 and arginine 186 each contribute to the substrate site. Residues aspartate 209 and histidine 211 each coordinate Mn(2+). The segment at proline 285–arginine 347 is catalytic subdomain B. Substrate is bound at residue tryptophan 316. Mn(2+) is bound at residue histidine 344. Positions 347 and 352 each coordinate substrate. The 123-residue stretch at phenylalanine 429–arginine 551 folds into the Ricin B-type lectin domain. N-linked (GlcNAc...) asparagine glycosylation occurs at asparagine 552.

The protein belongs to the glycosyltransferase 2 family. GalNAc-T subfamily. It depends on Mn(2+) as a cofactor. As to expression, heart, brain, spleen, liver, skeletal muscle and kidney.

It localises to the golgi apparatus. The protein resides in the golgi stack membrane. The protein localises to the secreted. It carries out the reaction L-seryl-[protein] + UDP-N-acetyl-alpha-D-galactosamine = a 3-O-[N-acetyl-alpha-D-galactosaminyl]-L-seryl-[protein] + UDP + H(+). The catalysed reaction is L-threonyl-[protein] + UDP-N-acetyl-alpha-D-galactosamine = a 3-O-[N-acetyl-alpha-D-galactosaminyl]-L-threonyl-[protein] + UDP + H(+). It participates in protein modification; protein glycosylation. Catalyzes the initial reaction in O-linked oligosaccharide biosynthesis, the transfer of an N-acetyl-D-galactosamine residue to a serine or threonine residue on the protein receptor. Has a broad spectrum of substrates such as apomucin-, MUC5AC-, MUC1- and MUC2-derived peptides. This Rattus norvegicus (Rat) protein is Polypeptide N-acetylgalactosaminyltransferase 1.